Reading from the N-terminus, the 119-residue chain is Large ribosomal subunit protein bL20 (119 aa).

This sequence belongs to the bacterial ribosomal protein bL20 family.

Its function is as follows. Binds directly to 23S ribosomal RNA and is necessary for the in vitro assembly process of the 50S ribosomal subunit. It is not involved in the protein synthesizing functions of that subunit. This chain is Large ribosomal subunit protein bL20, found in Rhodopseudomonas palustris (strain BisA53).